The primary structure comprises 192 residues: Immunity protein YqcF (192 aa).

In terms of assembly, probably interacts with cognate toxin YqcG but not with other non-cognate toxins. The interaction inhibits the toxic activity of YqcG.

The protein resides in the cytoplasm. Its function is as follows. Immunity component of one of 6 LXG toxin-immunity modules in this strain. They promote kin selection, mediate competition in biofilms, and drive spatial segregation of different strains, indicating that LXG toxins may help avoid warfare between strains in biofilms. Mediates intercellular competition during biofilm formation; disruption of the operon disadvantages the bacteria, but overexpression of the cognate immunity protein restores growth in competition with wild-type. In situ neutralizes the toxic effect of cognate toxin YqcG. Neutralizes the toxic activity of cognate toxin YqcG upon expression in E.coli. Does not have immunity protein activity on other LXG toxins. In Bacillus subtilis (strain 168), this protein is Immunity protein YqcF (yqcF).